Reading from the N-terminus, the 1399-residue chain is MKDLLNLLKNQGQIEEFDAIRIGLASPEMIRSWSFGEVKKPETINYRTFKPERDGLFCAKIFGPVKDYECLCGKYKRLKHRGVICEKCGVEVALAKVRRERMAHIELASPVAHIWFLKSLPSRIGLLMDMTLRDIERVLYFESYVVIDPGMTTLEKGQLLNDEQYFEALEEFGDDFDARMGAEAVRELLHAIDLDHEIGRLREEIPQTNSETKIKKLSKRLKLMEAFKDSGNLPEWMVLTVLPVLPPDLRPLVPLDGGRFATSDLNDLYRRVINRNNRLKRLLDLSAPDIIVRNEKRMLQEAVDALLDNGRRGRAITGSNKRPLKSLADMIKGKQGRFRQNLLGKRVDYSGRSVITVGPTLRLHQCGLPKKMALELFKPFIFGKLEMRGLATTIKAAKKMVERELPEVWDVLAEVIREHPVLLNRAPTLHRLGIQAFEPVLIEGKAIQLHPLVCAAYNADFDGDQMAVHVPLTLEAQLEARALMMSTNNILSPANGEPIIVPSQDVVLGLYYMTREAVNAKGEGRVFADLQEVDRVFRAGEASLHARVKVRINETVKEKDGSITKNTRIVDTTVGRALLFQIVPAGLSYDVVNQPMKKKAISKLINQCYRTVGLKDTVIFADQLMYTGFAYSTISGVSIGVNDFVIPEEKARIIDAATEEVKEIESQYASGLVTQGEKYNKVIDLWSKANDEVSKAMMANLSKEPVVDREGKTVEQESFNSMYMMADSGARGSAAQIRQLAGMRGLMAKPDGSIIETPITANFREGLSVLQYFISTHGARKGLADTALKTANSGYLTRRLVDVAQDLVVTEIDCGTEQGLLMTPHIEGGDVVEPLGERVLGRVIAKDVFKPGTEDVIVPAGTLIDEKWVEFIELNSVDEVVVRSPITCETRYGICAKCYGRDLARGHQVNIGEAVGVIAAQSIGEPGTQLTMRTFHIGGAASRTSAADSVQVKNGGAIRLHNLKHVERVDGNLVAVSRSGELAVADEFGRERERYKLPYGAVISVKEGDKVDAGAIVAKWDPHTHPIVTEMKGIVTFVGMEEGITIKRQTDELTGLTNIEVLDPKDRPAAGKDIRPAIKMVDANGKELLLPGTDVPAQYFLPANALVGVADGAQIAVGDVIARIPQETSKTRDITGGLPRVADLFEARRPKEASILAEISGTISFGKETKGKRRLVITPTDGSDPYEELIPKWRHLNVFEGEQVNRGEVISDGPSDPHDILRLLGVSALAKYIVNEIQDVYRLQGVKINDKHIETILRQMLRKVEVTESGDSSFIKGDQMELTQVLGENERLAEEDKFVAKYTRVLLGITKASLSTESFISAASFQETTRVLTEAAVTGKRDYLRGLKENVVVGRLIPAGTGLAYHSERKRKRDADKPVRVSASEVEAALTEALNSSGN.

Positions 70, 72, 85, and 88 each coordinate Zn(2+). Mg(2+) contacts are provided by aspartate 460, aspartate 462, and aspartate 464. Residues cysteine 814, cysteine 888, cysteine 895, and cysteine 898 each coordinate Zn(2+).

Belongs to the RNA polymerase beta' chain family. The RNAP catalytic core consists of 2 alpha, 1 beta, 1 beta' and 1 omega subunit. When a sigma factor is associated with the core the holoenzyme is formed, which can initiate transcription. The cofactor is Mg(2+). It depends on Zn(2+) as a cofactor.

The catalysed reaction is RNA(n) + a ribonucleoside 5'-triphosphate = RNA(n+1) + diphosphate. DNA-dependent RNA polymerase catalyzes the transcription of DNA into RNA using the four ribonucleoside triphosphates as substrates. The sequence is that of DNA-directed RNA polymerase subunit beta' from Ectopseudomonas mendocina (strain ymp) (Pseudomonas mendocina).